Reading from the N-terminus, the 603-residue chain is Elongation factor 4 (603 aa).

The 183-residue stretch at 7-189 (SRLRNFCIIA…AVVDRIPSPK (183 aa)) folds into the tr-type G domain. GTP is bound by residues 19–24 (DHGKST) and 136–139 (NKVD).

Belongs to the TRAFAC class translation factor GTPase superfamily. Classic translation factor GTPase family. LepA subfamily.

The protein resides in the cell inner membrane. It catalyses the reaction GTP + H2O = GDP + phosphate + H(+). Functionally, required for accurate and efficient protein synthesis under certain stress conditions. May act as a fidelity factor of the translation reaction, by catalyzing a one-codon backward translocation of tRNAs on improperly translocated ribosomes. Back-translocation proceeds from a post-translocation (POST) complex to a pre-translocation (PRE) complex, thus giving elongation factor G a second chance to translocate the tRNAs correctly. Binds to ribosomes in a GTP-dependent manner. This is Elongation factor 4 from Prochlorococcus marinus (strain NATL1A).